The chain runs to 1138 residues: Tyrosine-protein kinase receptor Tie-1 (1138 aa).

Residues 1–21 form the signal peptide; the sequence is MVWRVPPFLLPILFLASHVGA. Residues 22–759 are Extracellular-facing; the sequence is AVDLTLLANL…SRAAEEGLDQ (738 aa). Positions 43–105 constitute an Ig-like C2-type 1 domain; sequence CVSGEAGAGR…PSDLVGVFSC (63 aa). Asn83 and Asn161 each carry an N-linked (GlcNAc...) asparagine glycan. EGF-like domains follow at residues 214–256, 258–303, and 305–345; these read GCGA…TRCE, ACRE…SQCQ, and ACAP…VHCE. Disulfide bonds link Cys228-Cys237, Cys231-Cys244, and Cys246-Cys255. Intrachain disulfides connect Cys315-Cys327, Cys321-Cys333, and Cys335-Cys344. The 55-residue stretch at 372–426 folds into the Ig-like C2-type 2 domain; sequence CAAAGNPFPVRGSIELRKPDGTVLLSTKAIVEPEKTTAEFEVPRLVLADSGFWEC. Fibronectin type-III domains follow at residues 446–545, 548–642, and 646–739; these read PPVP…CPEP, QPWL…LPPS, and APRH…TLGN. Residues Asn503, Asn596, and Asn709 are each glycosylated (N-linked (GlcNAc...) asparagine). A helical membrane pass occupies residues 760 to 784; sequence QLILAVVGSVSATCLTILAALLTLV. Topologically, residues 785-1138 are cytoplasmic; sequence CIRRSCLHRR…AGIDATAEEA (354 aa). Positions 839 to 1118 constitute a Protein kinase domain; the sequence is ITFEDLIGEG…RMLEARKAYV (280 aa). Residues 845–853 and Lys870 contribute to the ATP site; that span reads IGEGNFGQV. Asp979 (proton acceptor) is an active-site residue. Tyr1007 is subject to Phosphotyrosine; by autocatalysis.

Belongs to the protein kinase superfamily. Tyr protein kinase family. Tie subfamily. Heterodimer with TEK/TIE2. Interacts with SVEP1 (via C-terminus). In terms of processing, phosphorylated on tyrosine residues in response to ANGPT1, most likely by TEK/TIE2. In terms of tissue distribution, specifically expressed in developing vascular endothelial cells.

The protein resides in the cell membrane. It catalyses the reaction L-tyrosyl-[protein] + ATP = O-phospho-L-tyrosyl-[protein] + ADP + H(+). Transmembrane tyrosine-protein kinase that may modulate TEK/TIE2 activity and contribute to the regulation of angiogenesis. The protein is Tyrosine-protein kinase receptor Tie-1 (TIE1) of Homo sapiens (Human).